Consider the following 103-residue polypeptide: Co-chaperonin GroES (103 aa).

It belongs to the GroES chaperonin family. In terms of assembly, heptamer of 7 subunits arranged in a ring. Interacts with the chaperonin GroEL.

Its subcellular location is the cytoplasm. Its function is as follows. Together with the chaperonin GroEL, plays an essential role in assisting protein folding. The GroEL-GroES system forms a nano-cage that allows encapsulation of the non-native substrate proteins and provides a physical environment optimized to promote and accelerate protein folding. GroES binds to the apical surface of the GroEL ring, thereby capping the opening of the GroEL channel. The polypeptide is Co-chaperonin GroES (Prochlorococcus marinus (strain MIT 9515)).